Here is a 683-residue protein sequence, read N- to C-terminus: Elongation factor G-like protein (683 aa).

Residues 5-267 (QNVRSAALIG…YLGDIGVSPE (263 aa)) form the tr-type G domain. GTP is bound by residues 14–21 (GHNGSGKS), 73–77 (DTPGF), and 127–130 (NQMD).

Belongs to the TRAFAC class translation factor GTPase superfamily. Classic translation factor GTPase family. EF-G/EF-2 subfamily.

In Thermotoga maritima (strain ATCC 43589 / DSM 3109 / JCM 10099 / NBRC 100826 / MSB8), this protein is Elongation factor G-like protein.